Reading from the N-terminus, the 175-residue chain is Major oleosin NAP-II (175 aa).

The segment at 1 to 47 (RRDQYPRDRDQYSMIGRDRDKYSMIGRDRDQYNMYGRDYSKSRQIAK) is polar. 2 repeats span residues 17–26 (RDRDKYSMIG) and 27–36 (RDRDQYNMYG). The hydrophobic stretch occupies residues 48 to 119 (AVTAVTAGGS…AAITVFSWIY (72 aa)). 3 helical membrane-spanning segments follow: residues 56–76 (GSLL…LTVA), 78–98 (PLLV…ALLI), and 99–119 (TGFL…SWIY). The interval 151–175 (AQYYGQQQTGGEDDRDRTRGTQHTT) is disordered.

It belongs to the oleosin family.

Its subcellular location is the lipid droplet. The protein localises to the membrane. In terms of biological role, may have a structural role to stabilize the lipid body during desiccation of the seed by preventing coalescence of the oil. Probably interacts with both lipid and phospholipid moieties of lipid bodies. May also provide recognition signals for specific lipase anchorage in lipolysis during seedling growth. This chain is Major oleosin NAP-II, found in Brassica napus (Rape).